The chain runs to 64 residues: Prokaryotic ubiquitin-like protein Pup (64 aa).

The tract at residues 1–32 (MNAKQTQIMGGGGRDEDNAEDSAQASGQVQIN) is disordered. The interval 20–58 (EDSAQASGQVQINTEGVDSLLDEIDGLLENNAEEFVRSY) is ARC ATPase binding. Over residues 21–32 (DSAQASGQVQIN) the composition is skewed to polar residues. Residue glutamate 64 forms an Isoglutamyl lysine isopeptide (Glu-Lys) (interchain with K-? in acceptor proteins) linkage.

It belongs to the prokaryotic ubiquitin-like protein family. As to quaternary structure, strongly interacts with the proteasome-associated ATPase ARC through a hydrophobic interface; the interacting region of Pup lies in its C-terminal half. There is one Pup binding site per ARC hexamer ring.

It functions in the pathway protein degradation; proteasomal Pup-dependent pathway. In terms of biological role, protein modifier that is covalently attached to lysine residues of substrate proteins, thereby targeting them for proteasomal degradation. The tagging system is termed pupylation. This Corynebacterium glutamicum (strain R) protein is Prokaryotic ubiquitin-like protein Pup.